Consider the following 540-residue polypeptide: Chaperonin GroEL (540 aa).

Residues 29–32, 86–90, G413, 477–479, and D493 contribute to the ATP site; these read TIGP, DGTTT, and NAA.

This sequence belongs to the chaperonin (HSP60) family. As to quaternary structure, forms a cylinder of 14 subunits composed of two heptameric rings stacked back-to-back. Interacts with the co-chaperonin GroES.

Its subcellular location is the cytoplasm. The catalysed reaction is ATP + H2O + a folded polypeptide = ADP + phosphate + an unfolded polypeptide.. Together with its co-chaperonin GroES, plays an essential role in assisting protein folding. The GroEL-GroES system forms a nano-cage that allows encapsulation of the non-native substrate proteins and provides a physical environment optimized to promote and accelerate protein folding. The protein is Chaperonin GroEL of Lactobacillus helveticus (strain DPC 4571).